We begin with the raw amino-acid sequence, 252 residues long: Pyridoxine 5'-phosphate synthase (252 aa).

The 3-amino-2-oxopropyl phosphate site is built by N8 and R19. H44 functions as the Proton acceptor in the catalytic mechanism. 2 residues coordinate 1-deoxy-D-xylulose 5-phosphate: R46 and H51. E75 acts as the Proton acceptor in catalysis. T110 is a 1-deoxy-D-xylulose 5-phosphate binding site. H201 acts as the Proton donor in catalysis. Residues D202 and 224 to 225 (GH) each bind 3-amino-2-oxopropyl phosphate.

It belongs to the PNP synthase family. As to quaternary structure, homooctamer; tetramer of dimers.

The protein localises to the cytoplasm. The enzyme catalyses 3-amino-2-oxopropyl phosphate + 1-deoxy-D-xylulose 5-phosphate = pyridoxine 5'-phosphate + phosphate + 2 H2O + H(+). It participates in cofactor biosynthesis; pyridoxine 5'-phosphate biosynthesis; pyridoxine 5'-phosphate from D-erythrose 4-phosphate: step 5/5. Functionally, catalyzes the complicated ring closure reaction between the two acyclic compounds 1-deoxy-D-xylulose-5-phosphate (DXP) and 3-amino-2-oxopropyl phosphate (1-amino-acetone-3-phosphate or AAP) to form pyridoxine 5'-phosphate (PNP) and inorganic phosphate. This is Pyridoxine 5'-phosphate synthase from Albidiferax ferrireducens (strain ATCC BAA-621 / DSM 15236 / T118) (Rhodoferax ferrireducens).